Here is a 338-residue protein sequence, read N- to C-terminus: N-acetyl-gamma-glutamyl-phosphate reductase (338 aa).

The active site involves cysteine 148.

The protein belongs to the NAGSA dehydrogenase family. Type 1 subfamily.

Its subcellular location is the cytoplasm. The enzyme catalyses N-acetyl-L-glutamate 5-semialdehyde + phosphate + NADP(+) = N-acetyl-L-glutamyl 5-phosphate + NADPH + H(+). The protein operates within amino-acid biosynthesis; L-arginine biosynthesis; N(2)-acetyl-L-ornithine from L-glutamate: step 3/4. In terms of biological role, catalyzes the NADPH-dependent reduction of N-acetyl-5-glutamyl phosphate to yield N-acetyl-L-glutamate 5-semialdehyde. This is N-acetyl-gamma-glutamyl-phosphate reductase from Leptospira interrogans serogroup Icterohaemorrhagiae serovar copenhageni (strain Fiocruz L1-130).